Consider the following 305-residue polypeptide: Ribonuclease BN (305 aa).

Positions 64, 66, 68, 69, 141, 212, and 270 each coordinate Zn(2+). The active-site Proton acceptor is Asp-68.

The protein belongs to the RNase Z family. RNase BN subfamily. In terms of assembly, homodimer. Zn(2+) is required as a cofactor.

Its function is as follows. Zinc phosphodiesterase, which has both exoribonuclease and endoribonuclease activities. This chain is Ribonuclease BN, found in Escherichia coli O17:K52:H18 (strain UMN026 / ExPEC).